The sequence spans 286 residues: Energy-coupling factor transporter ATP-binding protein EcfA2 (286 aa).

In terms of domain architecture, ABC transporter spans 3–246 (IRFDNVSYTY…KKKLADWHIG (244 aa)). Residue 40-47 (GQTGSGKS) participates in ATP binding.

Belongs to the ABC transporter superfamily. Energy-coupling factor EcfA family. As to quaternary structure, forms a stable energy-coupling factor (ECF) transporter complex composed of 2 membrane-embedded substrate-binding proteins (S component), 2 ATP-binding proteins (A component) and 2 transmembrane proteins (T component).

The protein resides in the cell membrane. ATP-binding (A) component of a common energy-coupling factor (ECF) ABC-transporter complex. Unlike classic ABC transporters this ECF transporter provides the energy necessary to transport a number of different substrates. The chain is Energy-coupling factor transporter ATP-binding protein EcfA2 from Staphylococcus aureus (strain USA300).